We begin with the raw amino-acid sequence, 2535 residues long: Piezo-type mechanosensitive ion channel component 1 (2535 aa).

3 helical membrane passes run Leu-13–Leu-25, Ala-29–Leu-44, and Leu-59–Leu-81. N-linked (GlcNAc...) asparagine glycosylation occurs at Asn-100. Helical transmembrane passes span Val-122–Leu-138, Leu-193–Ala-212, Ser-215–Cys-234, Leu-246–Thr-266, and Trp-308–Leu-328. Residues Asp-346–Glu-357 are compositionally biased toward acidic residues. The tract at residues Asp-346–Asp-377 is disordered. Residues Pro-358 to Pro-376 are compositionally biased toward low complexity. A glycan (N-linked (GlcNAc...) asparagine) is linked at Asn-380. The next 8 helical transmembrane spans lie at Leu-416–Tyr-436, Trp-439–Val-454, Leu-460–Trp-482, Cys-510–Leu-527, Ile-572–Gly-592, Leu-594–Val-614, Val-625–Phe-646, and Leu-677–Leu-693. Ser-749 carries the phosphoserine modification. Transmembrane regions (helical) follow at residues Leu-803–Lys-814, Val-818–Leu-831, Val-846–Leu-860, Gly-913–Arg-940, Gly-981–Arg-996, Phe-999–Arg-1014, Cys-1028–Leu-1043, Thr-1083–Ala-1104, Tyr-1140–Thr-1166, Gly-1172–Leu-1190, Leu-1204–Ser-1222, and Ile-1272–Phe-1288. A coiled-coil region spans residues His-1325 to Ser-1356. 2 disordered regions span residues Ala-1345 to Trp-1383 and Ser-1556 to Ser-1597. Residues Gln-1352–Pro-1365 show a composition bias toward polar residues. Phosphoserine is present on residues Ser-1372 and Ser-1377. The segment covering Ser-1579–Ser-1597 has biased composition (polar residues). Phosphoserine is present on residues Ser-1614, Ser-1618, and Ser-1633. Helical transmembrane passes span Pro-1644–Met-1687, Ala-1692–Leu-1707, Phe-1716–Phe-1734, and Asp-1767–Leu-1788. 2 stretches are compositionally biased toward basic and acidic residues: residues Pro-1801–Asp-1811 and Pro-1842–Pro-1867. A disordered region spans residues Pro-1801–Leu-1911. Over residues Gln-1868–Lys-1881 the composition is skewed to basic residues. Helical transmembrane passes span Tyr-1965–Trp-1984, Pro-2005–Ile-2021, Ala-2036–Val-2056, Ala-2065–Leu-2080, and Gly-2181–Ile-2201. Cys-2425 and Cys-2429 are disulfide-bonded. A helical membrane pass occupies residues Leu-2446–Gly-2466.

It belongs to the PIEZO (TC 1.A.75) family. In terms of assembly, homotrimer; the homotrimer forms a propeller-shaped Piezo channel with a cation-ion conducting pore. Heterotrimeric interaction may occur between PIEZO1 and PIEZO2. Interacts with PKD2. Interacts with STOM13. Interacts with TMC1, TMC2, PCDH15 and CIB2; the interaction may be part of the MET complex. Interacts with MDFIC (via C-terminus); the interaction prolongs Piezo channel inactivation. Interacts with MDFI (via C-terminus); the interaction prolongs Piezo channel inactivation. As to expression, moderate expression in lung and kidney. Very weak expression in heart, spleen and liver.

The protein resides in the endoplasmic reticulum membrane. It localises to the endoplasmic reticulum-Golgi intermediate compartment membrane. Its subcellular location is the cell membrane. It is found in the cell projection. The protein localises to the lamellipodium membrane. It catalyses the reaction K(+)(in) = K(+)(out). The catalysed reaction is Na(+)(in) = Na(+)(out). The enzyme catalyses Ca(2+)(in) = Ca(2+)(out). It carries out the reaction Mg(2+)(in) = Mg(2+)(out). Regulated by auxillary subunits MDFIC and MDFI. Down-regulated by phosphatidylserines exposed on the cell surface. Divalent ions decrease the single-channel permeability of K(+). Pore-forming subunit of the mechanosensitive non-specific cation Piezo channel required for rapidly adapting mechanically activated (MA) currents and has a key role in sensing touch and tactile pain. Piezo channels are homotrimeric three-blade propeller-shaped structures that utilize a cap-motion and plug-and-latch mechanism to gate their ion-conducting pathways. Generates currents characterized by a linear current-voltage relationship that are sensitive to ruthenium red and gadolinium. Conductance to monovalent alkali ions is highest for K(+), intermediate for Na(+) and lowest for Li(+). Divalent ions except for Mn(2+) permeate the channel but more slowly than the monovalent ions and they also reduce K(+) currents. Plays a key role in epithelial cell adhesion by maintaining integrin activation through R-Ras recruitment to the ER, most probably in its activated state, and subsequent stimulation of calpain signaling. In inner ear hair cells, PIEZO1/2 subunits may constitute part of the mechanotransducer (MET) non-selective cation channel complex where they may act as pore-forming ion-conducting component in the complex. In the kidney, may contribute to the detection of intraluminal pressure changes and to urine flow sensing. Acts as a shear-stress sensor that promotes endothelial cell organization and alignment in the direction of blood flow through calpain activation. Plays a key role in blood vessel formation and vascular structure in both development and adult physiology. Acts as a sensor of phosphatidylserine (PS) flipping at the plasma membrane and governs morphogenesis of muscle cells. In myoblasts, flippase-mediated PS enrichment at the inner leaflet of plasma membrane triggers channel activation and Ca(2+) influx followed by Rho GTPases signal transduction, leading to assembly of cortical actomyosin fibers and myotube formation. This chain is Piezo-type mechanosensitive ion channel component 1 (Piezo1), found in Rattus norvegicus (Rat).